The primary structure comprises 285 residues: Bifunctional protein FolD (285 aa).

NADP(+) is bound by residues 166 to 168 (GAS) and I232.

This sequence belongs to the tetrahydrofolate dehydrogenase/cyclohydrolase family. As to quaternary structure, homodimer.

It carries out the reaction (6R)-5,10-methylene-5,6,7,8-tetrahydrofolate + NADP(+) = (6R)-5,10-methenyltetrahydrofolate + NADPH. The enzyme catalyses (6R)-5,10-methenyltetrahydrofolate + H2O = (6R)-10-formyltetrahydrofolate + H(+). It functions in the pathway one-carbon metabolism; tetrahydrofolate interconversion. Catalyzes the oxidation of 5,10-methylenetetrahydrofolate to 5,10-methenyltetrahydrofolate and then the hydrolysis of 5,10-methenyltetrahydrofolate to 10-formyltetrahydrofolate. This is Bifunctional protein FolD from Pseudoalteromonas atlantica (strain T6c / ATCC BAA-1087).